The following is a 215-amino-acid chain: Ribulose-phosphate 3-epimerase (215 aa).

Position 13 (S13) interacts with substrate. The a divalent metal cation site is built by H38, D40, H69, and D175. The active-site Proton acceptor is D40. Residues H69, 175–177, and 196–197 each bind substrate; these read DGG and GS. D175 serves as the catalytic Proton donor.

The protein belongs to the ribulose-phosphate 3-epimerase family. It depends on a divalent metal cation as a cofactor.

It carries out the reaction D-ribulose 5-phosphate = D-xylulose 5-phosphate. It participates in carbohydrate degradation. Functionally, catalyzes the reversible epimerization of D-ribulose 5-phosphate to D-xylulose 5-phosphate. The protein is Ribulose-phosphate 3-epimerase of Mycoplasma pneumoniae (strain ATCC 29342 / M129 / Subtype 1) (Mycoplasmoides pneumoniae).